The following is an 819-amino-acid chain: Leucine--tRNA ligase (819 aa).

Residues 40 to 51 carry the 'HIGH' region motif; the sequence is PYPSGAGLHVGH. The 'KMSKS' region signature appears at 600-604; that stretch reads KMSKS. K603 contacts ATP.

This sequence belongs to the class-I aminoacyl-tRNA synthetase family.

Its subcellular location is the cytoplasm. It carries out the reaction tRNA(Leu) + L-leucine + ATP = L-leucyl-tRNA(Leu) + AMP + diphosphate. The protein is Leucine--tRNA ligase of Chlamydia trachomatis serovar L2 (strain ATCC VR-902B / DSM 19102 / 434/Bu).